We begin with the raw amino-acid sequence, 265 residues long: tRNA (guanine-N(1)-)-methyltransferase (265 aa).

Residues Gly119 and 139–144 (IGDYVL) contribute to the S-adenosyl-L-methionine site.

Belongs to the RNA methyltransferase TrmD family. Homodimer.

It is found in the cytoplasm. The enzyme catalyses guanosine(37) in tRNA + S-adenosyl-L-methionine = N(1)-methylguanosine(37) in tRNA + S-adenosyl-L-homocysteine + H(+). Its function is as follows. Specifically methylates guanosine-37 in various tRNAs. This is tRNA (guanine-N(1)-)-methyltransferase from Alcanivorax borkumensis (strain ATCC 700651 / DSM 11573 / NCIMB 13689 / SK2).